The chain runs to 842 residues: Elongation factor 2 (842 aa).

Positions 17-253 constitute a tr-type G domain; the sequence is TNVRNMSVIA…LWGDSYFNPK (237 aa). Residues 26 to 33, 158 to 161, and 213 to 215 each bind GTP; these read AHVDHGKS, NKVD, and SGL. His-699 bears the Diphthamide mark.

This sequence belongs to the TRAFAC class translation factor GTPase superfamily. Classic translation factor GTPase family. EF-G/EF-2 subfamily.

The protein resides in the cytoplasm. The enzyme catalyses GTP + H2O = GDP + phosphate + H(+). In terms of biological role, catalyzes the GTP-dependent ribosomal translocation step during translation elongation. During this step, the ribosome changes from the pre-translocational (PRE) to the post-translocational (POST) state as the newly formed A-site-bound peptidyl-tRNA and P-site-bound deacylated tRNA move to the P and E sites, respectively. Catalyzes the coordinated movement of the two tRNA molecules, the mRNA and conformational changes in the ribosome. The chain is Elongation factor 2 (EFT1) from Kluyveromyces lactis (strain ATCC 8585 / CBS 2359 / DSM 70799 / NBRC 1267 / NRRL Y-1140 / WM37) (Yeast).